A 312-amino-acid chain; its full sequence is MMVVAALLSWFLLGLFIHYSKKFGWGQPIRQDGPQTHLAKEGTPTAGGVAFVLALLLVFVGLLAFGGIGQANLSREVMILLAALGMGVVGGIDDFLKIRSRKFGGKKELLAREKFPLQVLVALLFAGFAAPLASHQLLPGFMSIGGYPIFDMLFIAFVMVGSVNAFNFTDGLDGLLAGVGMIVLLPLVAVSPIAALMVAVLLGFLWFNAHPARVFMGDMGSHAIGAVAAGAYALYSDVWLLPIAAIIPVAAVLSVVIQVASVRLRKRKVFKMSPIQHHFELSGWPETHVTLRFWVVTGIATALTWWLMGGRP.

Helical transmembrane passes span 1-21, 48-68, 76-96, 115-135, 140-160, 165-185, 214-234, 238-258, and 289-309; these read MMVVAALLSWFLLGLFIHYSK, GVAFVLALLLVFVGLLAFGGI, EVMILLAALGMGVVGGIDDFL, FPLQVLVALLFAGFAAPLASH, GFMSIGGYPIFDMLFIAFVMV, AFNFTDGLDGLLAGVGMIVLL, VFMGDMGSHAIGAVAAGAYAL, VWLLPIAAIIPVAAVLSVVIQ, and VTLRFWVVTGIATALTWWLMG.

It belongs to the glycosyltransferase 4 family. MraY subfamily. Mg(2+) serves as cofactor.

The protein localises to the cell membrane. It carries out the reaction UDP-N-acetyl-alpha-D-muramoyl-L-alanyl-gamma-D-glutamyl-meso-2,6-diaminopimeloyl-D-alanyl-D-alanine + di-trans,octa-cis-undecaprenyl phosphate = di-trans,octa-cis-undecaprenyl diphospho-N-acetyl-alpha-D-muramoyl-L-alanyl-D-glutamyl-meso-2,6-diaminopimeloyl-D-alanyl-D-alanine + UMP. It functions in the pathway cell wall biogenesis; peptidoglycan biosynthesis. Functionally, catalyzes the initial step of the lipid cycle reactions in the biosynthesis of the cell wall peptidoglycan: transfers peptidoglycan precursor phospho-MurNAc-pentapeptide from UDP-MurNAc-pentapeptide onto the lipid carrier undecaprenyl phosphate, yielding undecaprenyl-pyrophosphoryl-MurNAc-pentapeptide, known as lipid I. The polypeptide is Phospho-N-acetylmuramoyl-pentapeptide-transferase (Deinococcus radiodurans (strain ATCC 13939 / DSM 20539 / JCM 16871 / CCUG 27074 / LMG 4051 / NBRC 15346 / NCIMB 9279 / VKM B-1422 / R1)).